A 616-amino-acid chain; its full sequence is Protein cereblon (616 aa).

3 disordered regions span residues 1-39, 63-137, and 182-220; these read MDEEETAEINAQEQEVAGSAGEAAAGPSGAEVQPNDDSV, FGPS…AMPR, and SQERRRSRNSDEVSPEAEDDELPEHPPPPPPRPPIDIDM. A compositionally biased stretch (low complexity) spans 11 to 32; that stretch reads AQEQEVAGSAGEAAAGPSGAEV. Acidic residues predominate over residues 96-107; that stretch reads SEEDIVLDDGTE. The segment covering 183–192 has biased composition (basic and acidic residues); that stretch reads QERRRSRNSD. Acidic residues predominate over residues 194–203; sequence VSPEAEDDEL. The segment covering 206-215 has biased composition (pro residues); the sequence is HPPPPPPRPP. A Lon N-terminal domain is found at 257 to 482; sequence HMLIFLHQYI…LIGGILKEET (226 aa). The 110-residue stretch at 481 to 590 folds into the CULT domain; sequence ETLFYCRYCN…LAGSSVRIGK (110 aa). C486, C489, C555, and C558 together coordinate Zn(2+).

It belongs to the CRBN family. As to quaternary structure, likely a component of a DCX (DDB1-CUL4-X-box) protein ligase complex. May interact with pic/DDB1. Post-translationally, ubiquitinated.

The protein localises to the nucleus. It functions in the pathway protein modification; protein ubiquitination. In terms of biological role, substrate recognition component of a DCX (DDB1-CUL4-X-box) E3 protein ligase complex that mediates the ubiquitination and subsequent proteasomal degradation of target proteins. Has an essential role in mediating growth by negatively regulating insulin signaling. It also has a role in maintaining presynaptic function in the neuromuscular junction synapses of third-instar larvae. This is Protein cereblon from Drosophila pseudoobscura pseudoobscura (Fruit fly).